The chain runs to 159 residues: 3-hydroxyacyl-[acyl-carrier-protein] dehydratase FabZ (159 aa).

Histidine 58 is a catalytic residue.

The protein belongs to the thioester dehydratase family. FabZ subfamily.

The protein localises to the cytoplasm. The catalysed reaction is a (3R)-hydroxyacyl-[ACP] = a (2E)-enoyl-[ACP] + H2O. Functionally, involved in unsaturated fatty acids biosynthesis. Catalyzes the dehydration of short chain beta-hydroxyacyl-ACPs and long chain saturated and unsaturated beta-hydroxyacyl-ACPs. This is 3-hydroxyacyl-[acyl-carrier-protein] dehydratase FabZ from Helicobacter pylori (strain P12).